The sequence spans 184 residues: ATP synthase subunit b, chloroplastic (184 aa).

Residues 27-49 form a helical membrane-spanning segment; that stretch reads LATNPINLSVVFGVLIFFGKGVL.

This sequence belongs to the ATPase B chain family. F-type ATPases have 2 components, F(1) - the catalytic core - and F(0) - the membrane proton channel. F(1) has five subunits: alpha(3), beta(3), gamma(1), delta(1), epsilon(1). F(0) has four main subunits: a(1), b(1), b'(1) and c(10-14). The alpha and beta chains form an alternating ring which encloses part of the gamma chain. F(1) is attached to F(0) by a central stalk formed by the gamma and epsilon chains, while a peripheral stalk is formed by the delta, b and b' chains.

The protein localises to the plastid. It is found in the chloroplast thylakoid membrane. F(1)F(0) ATP synthase produces ATP from ADP in the presence of a proton or sodium gradient. F-type ATPases consist of two structural domains, F(1) containing the extramembraneous catalytic core and F(0) containing the membrane proton channel, linked together by a central stalk and a peripheral stalk. During catalysis, ATP synthesis in the catalytic domain of F(1) is coupled via a rotary mechanism of the central stalk subunits to proton translocation. Functionally, component of the F(0) channel, it forms part of the peripheral stalk, linking F(1) to F(0). In Arabis hirsuta (Hairy rock-cress), this protein is ATP synthase subunit b, chloroplastic.